The chain runs to 626 residues: Nuclear receptor subfamily 4 group A member 3 (626 aa).

Residues 1–108 (MPCVQAQYSP…HHHHHHHHHH (108 aa)) are activation function (AF)-1 domain. Residues 1–138 (MPCVQAQYSP…PSTSMYFKQS (138 aa)) form a required for DNA-PK heterotrimer region. The segment at 1–291 (MPCVQAQYSP…SRSSSSGEGT (291 aa)) is interaction with NCOA1, NCOA2, NCOA3 and KAT2B. Disordered stretches follow at residues 92–152 (PSYH…PPQA), 192–211 (HFKPSPPHPPAPSPAGGHHL), and 265–284 (PTASSLLGESPSLPSPPSRS). Basic residues predominate over residues 93 to 110 (SYHHHHHHHHHHHHHHQQ). Pro residues-rich tracts occupy residues 140 to 149 (PSTPTTPAFP) and 195 to 204 (PSPPHPPAPS). Over residues 268-284 (SSLLGESPSLPSPPSRS) the composition is skewed to low complexity. The segment at residues 289 to 364 (EGTCAVCGDN…VGMVKEVVRT (76 aa)) is a DNA-binding region (nuclear receptor). NR C4-type zinc fingers lie at residues 292 to 312 (CAVCGDNAACQHYGVRTCEGC) and 328 to 352 (CLANKNCPVDKRRRNRCQYCRFQKC). A disordered region spans residues 364 to 394 (TDSLKGRRGRLPSKPKSPLQQEPSQPSPPSP). A compositionally biased stretch (low complexity) spans 377-387 (KPKSPLQQEPS). The interaction with KAT2B stretch occupies residues 379–626 (KSPLQQEPSQ…DKLFLDTLPF (248 aa)). The NR LBD domain occupies 394–623 (PPICMMNALV…SIIDKLFLDT (230 aa)).

The protein belongs to the nuclear hormone receptor family. NR4 subfamily. Interacts with SIX3 (via homeobox); differentially regulates the transcriptional activities of NR4A3. Interacts with the constituents of DNA-PK heterotrimer PRKDC, XRCC6 and XRCC5; phosphorylates and prevents NR4A3 ubiquitinylation and degradation. Interacts with NCOA2; potentiates the activity of the NR4A3. Interacts with NCOA1, NCOA3, MED1 and KAT2B. Interacts with EP300 and NCOA2; mediates the recruitment of MED1 in the coactivator complex. Interacts with NR3C1 (via nuclear receptor DNA-binding domain); the interactions represses transcription activity of NR4A3 on the POMC promoter Nur response element (NurRE). Interacts with TRIM28; the interactions potentiates NR4A3 activity on NurRE promoter. Binds DNA as a monomer and homodimer. Interacts with PARP1; activates PARP1 by improving acetylation of PARP1 and suppressing the interaction between PARP1 and SIRT1. Phosphorylated by PRKDC. Isoform alpha is highly expressed in skeletal muscle. Isoform beta is highly expressed in skeletal muscle and low expressed in fetal brain and placenta.

It is found in the nucleus. Functionally, transcriptional activator that binds to regulatory elements in promoter regions in a cell- and response element (target)-specific manner. Induces gene expression by binding as monomers to the NR4A1 response element (NBRE) 5'-AAAAGGTCA-3' site and as homodimers to the Nur response element (NurRE) site in the promoter of their regulated target genes. Plays a role in the regulation of proliferation, survival and differentiation of many different cell types and also in metabolism and inflammation. Mediates proliferation of vascular smooth muscle, myeloid progenitor cell and type B pancreatic cells; promotes mitogen-induced vascular smooth muscle cell proliferation through transactivation of SKP2 promoter by binding a NBRE site. Upon PDGF stimulation, stimulates vascular smooth muscle cell proliferation by regulating CCND1 and CCND2 expression. In islets, induces type B pancreatic cell proliferation through up-regulation of genes that activate cell cycle, as well as genes that cause degradation of the CDKN1A. Negatively regulates myeloid progenitor cell proliferation by repressing RUNX1 in a NBRE site-independent manner. During inner ear, plays a role as a key mediator of the proliferative growth phase of semicircular canal development. Also mediates survival of neuron and smooth muscle cells; mediates CREB-induced neuronal survival, and during hippocampus development, plays a critical role in pyramidal cell survival and axonal guidance. Is required for S phase entry of the cell cycle and survival of smooth muscle cells by inducing CCND1, resulting in RB1 phosphorylation. Binds to NBRE motif in CCND1 promoter, resulting in the activation of the promoter and CCND1 transcription. Also plays a role in inflammation; upon TNF stimulation, mediates monocyte adhesion by inducing the expression of VCAM1 and ICAM1 by binding to the NBRE consensus site. In mast cells activated by Fc-epsilon receptor cross-linking, promotes the synthesis and release of cytokines but impairs events leading to degranulation. Also plays a role in metabolism; by modulating feeding behavior; and by playing a role in energy balance by inhibiting the glucocorticoid-induced orexigenic neuropeptides AGRP expression, at least in part by forming a complex with activated NR3C1 on the AGRP- glucocorticoid response element (GRE), and thus weakening the DNA binding activity of NR3C1. Upon catecholamines stimulation, regulates gene expression that controls oxidative metabolism in skeletal muscle. Plays a role in glucose transport by regulating translocation of the SLC2A4 glucose transporter to the cell surface. Finally, during gastrulation plays a crucial role in the formation of anterior mesoderm by controlling cell migration. Inhibits adipogenesis. Also participates in cardiac hypertrophy by activating PARP1. In Homo sapiens (Human), this protein is Nuclear receptor subfamily 4 group A member 3 (NR4A3).